A 327-amino-acid polypeptide reads, in one-letter code: MTKVEAIHKVSVVIPVYNEQESLPELIRRTTAACELLGKDYEILLVDDGSSDESASMLSDAAEEPGSHIVAVLLNRNYGQHNAIMAGFSHVTGDLIVTLDADLQNPPEEIPRLVAKADEGYDVVGTVRQNRQDTWFRKRASRLINRLIQSTTGKAMGDYGCMLRAYRRHIIDAMLHCHERSTFIPILANTFARKAIEIPVHHAEREFGESKYSFMRLINLMYDLVTCLTTTPLRMLSVFGSIIAVLGFTLSVLLVVLRIAFGPQWAADGVFMLFAVLFMFIGAQFVAMGLLGEYIGRIYTDVRARPRYFIQRVVSRGSVSTSKENQQ.

2 helical membrane-spanning segments follow: residues 236 to 256 and 270 to 290; these read LSVFGSIIAVLGFTLSVLLVV and VFMLFAVLFMFIGAQFVAMGL.

It belongs to the glycosyltransferase 2 family.

It is found in the cell inner membrane. It catalyses the reaction UDP-4-deoxy-4-formamido-beta-L-arabinose + di-trans,octa-cis-undecaprenyl phosphate = 4-deoxy-4-formamido-alpha-L-arabinopyranosyl di-trans,octa-cis-undecaprenyl phosphate + UDP. The protein operates within glycolipid biosynthesis; 4-amino-4-deoxy-alpha-L-arabinose undecaprenyl phosphate biosynthesis; 4-amino-4-deoxy-alpha-L-arabinose undecaprenyl phosphate from UDP-4-deoxy-4-formamido-beta-L-arabinose and undecaprenyl phosphate: step 1/2. It participates in bacterial outer membrane biogenesis; lipopolysaccharide biosynthesis. Catalyzes the transfer of 4-deoxy-4-formamido-L-arabinose from UDP to undecaprenyl phosphate. The modified arabinose is attached to lipid A and is required for resistance to polymyxin and cationic antimicrobial peptides. The polypeptide is Undecaprenyl-phosphate 4-deoxy-4-formamido-L-arabinose transferase (Enterobacter sp. (strain 638)).